The chain runs to 3396 residues: Versican core protein (3396 aa).

The first 20 residues, 1 to 20, serve as a signal peptide directing secretion; sequence MFINIKSILWMCSTLIVTHA. The Ig-like V-type domain occupies 21-146; that stretch reads LHKVKVGKSP…EDTQDTVSLT (126 aa). Cystine bridges form between Cys-44–Cys-130, Cys-172–Cys-243, Cys-196–Cys-217, Cys-270–Cys-345, and Cys-294–Cys-315. N-linked (GlcNAc...) asparagine glycosylation is present at Asn-57. 2 Link domains span residues 150 to 245 and 251 to 347; these read VVFH…YCYV and DVFH…YCFK. An N-linked (GlcNAc...) asparagine glycan is attached at Asn-330. A GAG-alpha (glucosaminoglycan attachment domain) region spans residues 348 to 1335; sequence PKEATTIDLS…IIEVRENKTG (988 aa). The span at 420 to 430 shows a compositional bias: polar residues; the sequence is ATKLPTPTGST. Disordered regions lie at residues 420 to 439 and 603 to 622; these read ATKL…MDDY and STTV…MDDW. Asn-615 carries N-linked (GlcNAc...) asparagine glycosylation. A glycan (O-linked (Xyl...) (chondroitin sulfate) serine) is linked at Ser-659. Residues Asn-782 and Asn-809 are each glycosylated (N-linked (GlcNAc...) asparagine). Disordered regions lie at residues 807–829, 1126–1154, and 1277–1316; these read EDNT…LPPA, IGPK…TSSL, and REYF…PAST. Residues 811-824 are compositionally biased toward polar residues; it reads TSKPLESTEPSASS. The span at 1143 to 1154 shows a compositional bias: low complexity; it reads EGSSTTGFTSSL. N-linked (GlcNAc...) asparagine glycosylation is found at Asn-1332 and Asn-1398. Residues 1336-3089 are GAG-beta; that stretch reads RMSDLSVIGH…VEGTAIYLPG (1754 aa). Disordered stretches follow at residues 1420–1497 and 1510–1539; these read VPKD…SGGE and FESG…HTEP. Residues 1422–1433 are compositionally biased toward basic and acidic residues; the sequence is KDPEAAEARRGQ. Asn-1442 and Asn-1468 each carry an N-linked (GlcNAc...) asparagine glycan. Low complexity predominate over residues 1469 to 1480; sequence ESTETTESLEVT. The segment covering 1517–1538 has biased composition (basic and acidic residues); the sequence is KGAESVTERDTEVGHQAHEHTE. 2 O-linked (Xyl...) (chondroitin sulfate) serine glycosylation sites follow: Ser-1548 and Ser-1631. Asn-1663 carries N-linked (GlcNAc...) asparagine glycosylation. Disordered regions lie at residues 1717–1737 and 1759–1789; these read STTV…TAST and PNVA…MTDS. Over residues 1720–1729 the composition is skewed to basic and acidic residues; it reads VEEKKRKEEE. The segment covering 1760–1781 has biased composition (polar residues); the sequence is NVATSSDSGTRKSFMSLTTPTQ. A glycan (N-linked (GlcNAc...) asparagine) is linked at Asn-1898. O-linked (Xyl...) (chondroitin sulfate) serine glycans are attached at residues Ser-1935 and Ser-1959. Disordered regions lie at residues 1962-1994, 2107-2134, and 2168-2188; these read AAFR…STMV, RQEI…NSPA, and KEMK…PDAN. Positions 1969-1978 are enriched in low complexity; it reads TSPSTVPTSV. A compositionally biased stretch (acidic residues) spans 2111 to 2120; that stretch reads ESETTSEEQI. Phosphoserine; by FAM20C is present on Ser-2116. Residue Asn-2179 is glycosylated (N-linked (GlcNAc...) asparagine). Ser-2247 and Ser-2254 each carry an O-linked (Xyl...) (chondroitin sulfate) serine glycan. Residues Asn-2272, Asn-2280, Asn-2360, Asn-2385, and Asn-2392 are each glycosylated (N-linked (GlcNAc...) asparagine). Disordered stretches follow at residues 2371-2396, 2445-2473, 2493-2518, and 2598-2617; these read TSRP…ETTT, SATT…EVPS, SEQN…STDG, and DTEV…DDST. 2 stretches are compositionally biased toward polar residues: residues 2445 to 2461 and 2496 to 2513; these read SATT…TFVS and NKSS…VSYE. N-linked (GlcNAc...) asparagine glycosylation occurs at Asn-2496. Phosphoserine is present on Ser-2608. At Thr-2617 the chain carries Phosphothreonine. A glycan (N-linked (GlcNAc...) asparagine) is linked at Asn-2628. O-linked (Xyl...) (chondroitin sulfate) serine glycans are attached at residues Ser-2722, Ser-2723, and Ser-2767. Disordered stretches follow at residues 2834 to 2856 and 2881 to 2905; these read GSEA…DVGS and EEYL…EDDG. The span at 2896–2905 shows a compositional bias: basic and acidic residues; sequence TKLEPSEDDG. Asn-2934 carries N-linked (GlcNAc...) asparagine glycosylation. Ser-2941 carries O-linked (Xyl...) (chondroitin sulfate) serine glycosylation. The N-linked (GlcNAc...) asparagine glycan is linked to Asn-3067. The region spanning 3089-3125 is the EGF-like 1 domain; the sequence is GPDRCKMNPCLNGGTCYPTETSYVCTCVPGYSGDQCE. 11 disulfide bridges follow: Cys-3093–Cys-3104, Cys-3098–Cys-3113, Cys-3115–Cys-3124, Cys-3131–Cys-3142, Cys-3136–Cys-3151, Cys-3153–Cys-3162, Cys-3169–Cys-3180, Cys-3197–Cys-3289, Cys-3265–Cys-3281, Cys-3296–Cys-3339, and Cys-3325–Cys-3352. Residues 3127-3163 form the EGF-like 2; calcium-binding domain; the sequence is DFDECHSNPCRNGATCVDGFNTFRCLCLPSYVGALCE. Residues 3176 to 3290 enclose the C-type lectin domain; that stretch reads FQGQCYKYFA…CNYHLTYTCK (115 aa). Residues 3294 to 3354 enclose the Sushi domain; it reads VACGQPPVVE…WAIPKITCMN (61 aa). N-linked (GlcNAc...) asparagine glycosylation is found at Asn-3369 and Asn-3379. Positions 3371–3380 are enriched in polar residues; the sequence is SSAKDNSINT. The segment at 3371 to 3396 is disordered; that stretch reads SSAKDNSINTSKHDHRWSRRWQESRR.

This sequence belongs to the aggrecan/versican proteoglycan family. In terms of assembly, interacts with FBLN1. In terms of processing, phosphorylated by FAM20C in the extracellular medium. Proteolytically cleaved by ADAMTS5 and ADAMTS15 in the pericellular matrix surrounding myoblasts, facilitating myoblast contact and fusion which is required for skeletal muscle development and regeneration. In terms of tissue distribution, detected in placenta (at protein level). Detected in cerebrospinal fluid, fibroblasts and urine (at protein level). Expressed in the retina (at protein level). Cerebral white matter and plasma. Isoform V0: Expressed in normal brain, gliomas, medulloblastomas, schwannomas, neurofibromas, and meningiomas. Isoform V1: Expressed in normal brain, gliomas, medulloblastomas, schwannomas, neurofibromas, and meningiomas. Isoform V2: Restricted to normal brain and gliomas. Isoform V3: Found in all these tissues except medulloblastomas.

Its subcellular location is the secreted. It is found in the extracellular space. The protein localises to the extracellular matrix. It localises to the cell projection. The protein resides in the cilium. Its subcellular location is the photoreceptor outer segment. It is found in the interphotoreceptor matrix. Its function is as follows. May play a role in intercellular signaling and in connecting cells with the extracellular matrix. May take part in the regulation of cell motility, growth and differentiation. Binds hyaluronic acid. The protein is Versican core protein (VCAN) of Homo sapiens (Human).